A 601-amino-acid chain; its full sequence is uncharacterized protein (601 aa).

The interval Ser-127–His-364 is disordered. Polar residues predominate over residues Ser-128–Asp-137. Residues Arg-141 to Ser-154 show a composition bias toward low complexity. Polar residues-rich tracts occupy residues Thr-159 to Arg-177, Ala-199 to Pro-213, and Ser-232 to Gln-250. Residues Ser-247 and Ser-281 each carry the phosphoserine modification. Over residues Ser-265 to Ser-281 the composition is skewed to low complexity. Basic and acidic residues-rich tracts occupy residues Asp-286 to Lys-296 and Gly-313 to Ala-325. Ser-335 carries the post-translational modification Phosphoserine. Positions Asp-338–Ala-356 are enriched in polar residues.

This is an uncharacterized protein from Schizosaccharomyces pombe (strain 972 / ATCC 24843) (Fission yeast).